Here is a 347-residue protein sequence, read N- to C-terminus: Probable magnetosome protein Mms36 (347 aa).

The chain crosses the membrane as a helical span at residues valine 25–alanine 45.

The protein localises to the magnetosome membrane. In terms of biological role, the 4 genes of this operon collectively influence magnetosome size and number. The polypeptide is Probable magnetosome protein Mms36 (Magnetospirillum gryphiswaldense (strain DSM 6361 / JCM 21280 / NBRC 15271 / MSR-1)).